Consider the following 141-residue polypeptide: Cystatin-13 (141 aa).

Positions 1 to 24 (MARFLQTLLFLVIMVEFVSRRVEA) are cleaved as a signal peptide. The interval 76 to 80 (QITDS) is secondary area of contact. Disulfide bonds link C94–C104 and C118–C138.

Belongs to the cystatin family. In terms of tissue distribution, expressed exclusively in testis. Found in spermatagonia, spermatocytes, round spermatids, elongating spermatids and spermatozoa.

Its subcellular location is the secreted. It localises to the cytoplasm. May perform a specialized role during sperm development and maturation. The protein is Cystatin-13 of Mus musculus (Mouse).